The following is a 249-amino-acid chain: 4-hydroxy-tetrahydrodipicolinate reductase (249 aa).

NAD(+) contacts are provided by residues 8–13, 87–89, and 111–114; these read GVTGQM, GTT, and ATNF. The Proton donor/acceptor role is filled by His143. His144 contacts (S)-2,3,4,5-tetrahydrodipicolinate. The active-site Proton donor is the Lys147. Residue 153-154 participates in (S)-2,3,4,5-tetrahydrodipicolinate binding; it reads GT.

The protein belongs to the DapB family.

The protein localises to the cytoplasm. It carries out the reaction (S)-2,3,4,5-tetrahydrodipicolinate + NAD(+) + H2O = (2S,4S)-4-hydroxy-2,3,4,5-tetrahydrodipicolinate + NADH + H(+). The enzyme catalyses (S)-2,3,4,5-tetrahydrodipicolinate + NADP(+) + H2O = (2S,4S)-4-hydroxy-2,3,4,5-tetrahydrodipicolinate + NADPH + H(+). Its pathway is amino-acid biosynthesis; L-lysine biosynthesis via DAP pathway; (S)-tetrahydrodipicolinate from L-aspartate: step 4/4. Functionally, catalyzes the conversion of 4-hydroxy-tetrahydrodipicolinate (HTPA) to tetrahydrodipicolinate. This Haloarcula marismortui (strain ATCC 43049 / DSM 3752 / JCM 8966 / VKM B-1809) (Halobacterium marismortui) protein is 4-hydroxy-tetrahydrodipicolinate reductase.